We begin with the raw amino-acid sequence, 113 residues long: Hydrogenase maturation factor HypA (113 aa).

H2 is a binding site for Ni(2+). Residues C73, C76, C89, and C92 each coordinate Zn(2+).

Belongs to the HypA/HybF family.

Its function is as follows. Involved in the maturation of [NiFe] hydrogenases. Required for nickel insertion into the metal center of the hydrogenase. This Azorhizobium caulinodans (strain ATCC 43989 / DSM 5975 / JCM 20966 / LMG 6465 / NBRC 14845 / NCIMB 13405 / ORS 571) protein is Hydrogenase maturation factor HypA.